Consider the following 387-residue polypeptide: MNELDATDPSDWNQTKIPSLKGLDSSLRCLICHEYFRAPLITSCSHTFCSFCIRDYLREHPMCPACRAPEQESRLRKNTILEEILESFKVIRPTLFEFLKVENVPKPVLQAPETVIAQDSASGDEEWEDDLASNSSPASIAKKTSRDSKKRKREDLVHCPACSNLVPHNQINQHLDSCLNSPSSPSSSSSPYKNKDNSKSNSLLSFKTDDDSITKRRLRSFNSADELPLKDRVRLPKLTYALLSESKIRSKLSEMGLPTDGHKQLLQRRHAKWVTLYNSNLDQKQPVSKRNLIRQLIDWERVQSKSIGVEKEKLGGGDWEKAYAEDFADLINRAKQSTTNKNDSLRNTAVESSTEPSTSNGFPATSVSPPLTIDLTNSQTGSDGPQS.

Residues 29-67 form an RING-type zinc finger; sequence CLICHEYFRAPLITSCSHTFCSFCIRDYLREHPMCPACR. Residues 119 to 153 form a disordered region; the sequence is DSASGDEEWEDDLASNSSPASIAKKTSRDSKKRKR. Residues 122–131 show a composition bias toward acidic residues; it reads SGDEEWEDDL. Residues 156–183 form a UBZ4-type zinc finger; sequence LVHCPACSNLVPHNQINQHLDSCLNSPS. Zn(2+) contacts are provided by C159, C162, H174, and C178. The segment at 174-206 is disordered; it reads HLDSCLNSPSSPSSSSSPYKNKDNSKSNSLLSF. The segment covering 177–192 has biased composition (low complexity); it reads SCLNSPSSPSSSSSPY. An SAP domain is found at 240–274; it reads YALLSESKIRSKLSEMGLPTDGHKQLLQRRHAKWV. The tract at residues 335–387 is disordered; that stretch reads KQSTTNKNDSLRNTAVESSTEPSTSNGFPATSVSPPLTIDLTNSQTGSDGPQS.

It belongs to the RAD18 family. In terms of assembly, interacts with E2 ubc2, forming a complex with ubiquitin ligase activity.

The protein localises to the nucleus. The catalysed reaction is S-ubiquitinyl-[E2 ubiquitin-conjugating enzyme]-L-cysteine + [acceptor protein]-L-lysine = [E2 ubiquitin-conjugating enzyme]-L-cysteine + N(6)-ubiquitinyl-[acceptor protein]-L-lysine.. Its pathway is protein modification; protein ubiquitination. Functionally, E3 RING-finger protein, member of the UBC2/RAD6 epistasis group. Associates to the E2 ubiquitin conjugating enzyme ubc2/rad6 to form the ubc2-rad18 ubiquitin ligase complex involved in postreplicative repair (PRR) of damaged DNA. This Schizosaccharomyces pombe (strain 972 / ATCC 24843) (Fission yeast) protein is Postreplication repair E3 ubiquitin-protein ligase rad18 (rhp18).